An 87-amino-acid polypeptide reads, in one-letter code: Small ribosomal subunit protein bS18 (87 aa).

A disordered region spans residues methionine 1–lysine 21.

The protein belongs to the bacterial ribosomal protein bS18 family. In terms of assembly, part of the 30S ribosomal subunit. Forms a tight heterodimer with protein bS6.

Binds as a heterodimer with protein bS6 to the central domain of the 16S rRNA, where it helps stabilize the platform of the 30S subunit. This chain is Small ribosomal subunit protein bS18, found in Chlorobium phaeobacteroides (strain DSM 266 / SMG 266 / 2430).